The following is a 118-amino-acid chain: Large ribosomal subunit protein uL18 (118 aa).

It belongs to the universal ribosomal protein uL18 family. Part of the 50S ribosomal subunit; part of the 5S rRNA/L5/L18/L25 subcomplex. Contacts the 5S and 23S rRNAs.

This is one of the proteins that bind and probably mediate the attachment of the 5S RNA into the large ribosomal subunit, where it forms part of the central protuberance. The sequence is that of Large ribosomal subunit protein uL18 from Limosilactobacillus reuteri (strain DSM 20016) (Lactobacillus reuteri).